The chain runs to 619 residues: 1-deoxy-D-xylulose-5-phosphate synthase (619 aa).

Residues His74 and Gly115–Ser117 contribute to the thiamine diphosphate site. Asp146 contributes to the Mg(2+) binding site. Thiamine diphosphate-binding positions include Gly147–Ala148, Asn175, Tyr285, and Glu365. A Mg(2+)-binding site is contributed by Asn175.

The protein belongs to the transketolase family. DXPS subfamily. In terms of assembly, homodimer. It depends on Mg(2+) as a cofactor. The cofactor is thiamine diphosphate.

The enzyme catalyses D-glyceraldehyde 3-phosphate + pyruvate + H(+) = 1-deoxy-D-xylulose 5-phosphate + CO2. The protein operates within metabolic intermediate biosynthesis; 1-deoxy-D-xylulose 5-phosphate biosynthesis; 1-deoxy-D-xylulose 5-phosphate from D-glyceraldehyde 3-phosphate and pyruvate: step 1/1. Its function is as follows. Catalyzes the acyloin condensation reaction between C atoms 2 and 3 of pyruvate and glyceraldehyde 3-phosphate to yield 1-deoxy-D-xylulose-5-phosphate (DXP). In Clostridium perfringens (strain SM101 / Type A), this protein is 1-deoxy-D-xylulose-5-phosphate synthase.